Reading from the N-terminus, the 212-residue chain is Large ribosomal subunit protein uL3 (212 aa).

Glutamine 153 is subject to N5-methylglutamine.

Belongs to the universal ribosomal protein uL3 family. In terms of assembly, part of the 50S ribosomal subunit. Forms a cluster with proteins L14 and L19. In terms of processing, methylated by PrmB.

Its function is as follows. One of the primary rRNA binding proteins, it binds directly near the 3'-end of the 23S rRNA, where it nucleates assembly of the 50S subunit. The protein is Large ribosomal subunit protein uL3 of Acinetobacter baylyi (strain ATCC 33305 / BD413 / ADP1).